Here is a 427-residue protein sequence, read N- to C-terminus: N-formyl-4-amino-5-aminomethyl-2-methylpyrimidine deformylase (427 aa).

His91 is a binding site for Zn(2+). The active site involves Asp93. Zn(2+) is bound at residue Asp124. Glu158 serves as the catalytic Proton acceptor. Positions 159, 182, and 396 each coordinate Zn(2+).

The protein belongs to the peptidase M20A family. Requires Zn(2+) as cofactor. The cofactor is Co(2+).

It catalyses the reaction N-formyl-4-amino-5-aminomethyl-2-methylpyrimidine + H2O = 4-amino-5-aminomethyl-2-methylpyrimidine + formate. It functions in the pathway cofactor biosynthesis; thiamine diphosphate biosynthesis. Functionally, catalyzes the deformylation of the formylaminopyrimidine N-formyl-4-amino-5-aminomethyl-2-methylpyrimidine (FAMP) to give the corresponding aminopyrimidine. The polypeptide is N-formyl-4-amino-5-aminomethyl-2-methylpyrimidine deformylase (Halalkalibacterium halodurans (strain ATCC BAA-125 / DSM 18197 / FERM 7344 / JCM 9153 / C-125) (Bacillus halodurans)).